Reading from the N-terminus, the 170-residue chain is Disulfide bond formation protein B (170 aa).

The Cytoplasmic segment spans residues 1 to 14 (MNDSTLALRRERRL). Residues 15-31 (LMLLGWVCIALLAGALY) form a helical membrane-spanning segment. Over 32–49 (LQYVKNEDPCPLCIIQRY) the chain is Periplasmic. Cys-41 and Cys-44 are oxidised to a cystine. The chain crosses the membrane as a helical span at residues 50-64 (FFAAIGIFAFLAAGI). Residues 65–71 (RNWRVIW) are Cytoplasmic-facing. The helical transmembrane segment at 72-89 (VFELLIAIAAAGGVGTAA) threads the bilayer. The Periplasmic portion of the chain corresponds to 90 to 144 (RHLSIQMNPGFSCGFDTLQPIVDSLPPAQWFPGMFKVAGLCETVYPPIFGILLPG). Cys-102 and Cys-130 form a disulfide bridge. A helical membrane pass occupies residues 145-163 (WALIGFAVILVAVASSLWR). The Cytoplasmic segment spans residues 164–170 (HRRKLAG).

The protein belongs to the DsbB family.

The protein resides in the cell inner membrane. Its function is as follows. Required for disulfide bond formation in some periplasmic proteins. Acts by oxidizing the DsbA protein. The polypeptide is Disulfide bond formation protein B (Burkholderia ambifaria (strain ATCC BAA-244 / DSM 16087 / CCUG 44356 / LMG 19182 / AMMD) (Burkholderia cepacia (strain AMMD))).